We begin with the raw amino-acid sequence, 64 residues long: Cytochrome c oxidase subunit 5C-2 (64 aa).

Residues 15–34 (SVVKELIIGLTLGLAAGGLW) traverse the membrane as a helical segment.

This sequence belongs to the cytochrome c oxidase subunit 5C family.

The protein resides in the mitochondrion inner membrane. This protein is one of the nuclear-coded polypeptide chains of cytochrome c oxidase, the terminal oxidase in mitochondrial electron transport. This Arabidopsis thaliana (Mouse-ear cress) protein is Cytochrome c oxidase subunit 5C-2.